Here is a 167-residue protein sequence, read N- to C-terminus: Lipoprotein signal peptidase (167 aa).

4 consecutive transmembrane segments (helical) span residues 8 to 28 (TFLTLLLLASIDWVSKLVVLL), 46 to 66 (WGHFSFLIIPSFNEGAAFGLF), 68 to 88 (QYKIPLLIFRVCVILGLALFL), and 101 to 121 (IALTLILAGALGNVGDILLHG). Residues D125 and D143 contribute to the active site. The helical transmembrane segment at 139–159 (FNLADAFISIGTLLLIGHLYF) threads the bilayer.

This sequence belongs to the peptidase A8 family.

The protein localises to the cell inner membrane. It catalyses the reaction Release of signal peptides from bacterial membrane prolipoproteins. Hydrolyzes -Xaa-Yaa-Zaa-|-(S,diacylglyceryl)Cys-, in which Xaa is hydrophobic (preferably Leu), and Yaa (Ala or Ser) and Zaa (Gly or Ala) have small, neutral side chains.. It functions in the pathway protein modification; lipoprotein biosynthesis (signal peptide cleavage). This protein specifically catalyzes the removal of signal peptides from prolipoproteins. The chain is Lipoprotein signal peptidase from Chlamydia trachomatis serovar L2 (strain ATCC VR-902B / DSM 19102 / 434/Bu).